A 302-amino-acid polypeptide reads, in one-letter code: MLVVFKRLGFIVSIFSLTFLSACAAFDKWQEFYINNIPSSTEIHRFNYDLNFSLTFTNRITSNGEAKFSVTYGTGWLIDWKEPDKKKENDPFRAYLATNLHVAASLINPQDYEPYKNKDDAGWTTTFRLGKYTKVSDFVSPNQFGLPNAAQALVNVQTSVIPKTAFAARDFVDYSFPQEQKDKEKRKQQWVKNSHTKNSDVQPFAEFAILEIPLFSKSKVDRKIFNHFIQPAIRTYKQLGDSLNIFANPTLDQLKQNRYYVLGYPFLKNKVSSLFLNQTGKKKGIFRRKYTNIPWKTSYYLN.

The N-terminal stretch at 1–22 is a signal peptide; sequence MLVVFKRLGFIVSIFSLTFLSA. C23 is lipidated: N-palmitoyl cysteine. C23 carries S-diacylglycerol cysteine lipidation.

The protein belongs to the MG067/MG068/MG395 family.

The protein localises to the cell membrane. This is an uncharacterized protein from Mycoplasma pneumoniae (strain ATCC 29342 / M129 / Subtype 1) (Mycoplasmoides pneumoniae).